A 729-amino-acid chain; its full sequence is Cytoplasmic polyadenylation element-binding protein 4 (729 aa).

Disordered regions lie at residues 20–50 (FPVRFHPHLQPPHHHQNATPNPAAFINNNTA) and 78–133 (EKAK…KEKL). Over residues 24 to 35 (FHPHLQPPHHHQ) the composition is skewed to basic residues. Low complexity predominate over residues 83-96 (QQQEQQDPLEKQQL). Phosphoserine occurs at positions 97, 99, and 137. The tract at residues 218–324 (FGGSFSPQIG…RDHRRGLNGG (107 aa)) is disordered. Residues 232-249 (HHPHHPHFQHHHSQHQQQ) show a composition bias toward basic residues. Phosphoserine occurs at positions 252 and 255. A compositionally biased stretch (low complexity) spans 285 to 300 (WSSYQSPSPTPSSSWS). Over residues 301-311 (PGGGGYGGWGA) the composition is skewed to gly residues. Residue threonine 326 is modified to Phosphothreonine. 2 positions are modified to phosphoserine: serine 330 and serine 332. 2 consecutive RRM domains span residues 472-563 (RKVF…PWNL) and 580-662 (KTIF…PYVL). The interval 541–543 (KLY) is RNA-binding. Zn(2+)-binding residues include cysteine 667, cysteine 675, cysteine 684, cysteine 689, cysteine 694, cysteine 697, histidine 702, and histidine 710.

Belongs to the RRM CPEB family. As to quaternary structure, interacts with TOB1. As to expression, highly expressed in brain, including hippocampus, amygdala, granule and Purkinje cells of the cerebellum (at protein level). Expressed in spinal cord (at protein level). Expressed in kidney, lung and heart (at protein level). Expressed in liver (at protein level). Expressed in spleen and testis (at protein level). Weakly expressed in ovary and in granular cells of dentate gyrus and the pyramidal cells of CA3 and CA1 of the hippocampus.

The protein localises to the cytoplasm. It is found in the cell projection. Its subcellular location is the dendrite. It localises to the dendritic spine. The protein resides in the postsynaptic density. The protein localises to the axon. It is found in the growth cone. Its subcellular location is the endoplasmic reticulum. It localises to the perinuclear region. Its function is as follows. Sequence-specific RNA-binding protein that binds to the cytoplasmic polyadenylation element (CPE), an uridine-rich sequence element (consensus sequence 5'-UUUUUAU-3') within the mRNA 3'-UTR. RNA binding results in a clear conformational change analogous to the Venus fly trap mechanism. Regulates activation of unfolded protein response (UPR) in the process of adaptation to ER stress in liver, by maintaining translation of CPE-regulated mRNAs in conditions in which global protein synthesis is inhibited. Required for cell cycle progression, specifically for cytokinesis and chromosomal segregation. Plays a role as an oncogene promoting tumor growth and progression by positively regulating translation of t-plasminogen activator/PLAT. Stimulates proliferation of melanocytes. In contrast to CPEB1 and CPEB3, does not play role in synaptic plasticity, learning and memory. In Mus musculus (Mouse), this protein is Cytoplasmic polyadenylation element-binding protein 4 (Cpeb4).